The following is a 311-amino-acid chain: Manganese-dependent inorganic pyrophosphatase (311 aa).

The Mn(2+) site is built by histidine 10, aspartate 14, aspartate 16, aspartate 75, histidine 97, and aspartate 149.

The protein belongs to the PPase class C family. As to quaternary structure, homodimer. It depends on Mn(2+) as a cofactor.

The catalysed reaction is diphosphate + H2O = 2 phosphate + H(+). The protein is Manganese-dependent inorganic pyrophosphatase (ppaC) of Methanothrix thermoacetophila (strain DSM 6194 / JCM 14653 / NBRC 101360 / PT) (Methanosaeta thermophila).